Reading from the N-terminus, the 263-residue chain is tRNA pseudouridine synthase A (263 aa).

Asp51 acts as the Nucleophile in catalysis. Position 109 (Tyr109) interacts with substrate.

Belongs to the tRNA pseudouridine synthase TruA family. Homodimer.

The catalysed reaction is uridine(38/39/40) in tRNA = pseudouridine(38/39/40) in tRNA. In terms of biological role, formation of pseudouridine at positions 38, 39 and 40 in the anticodon stem and loop of transfer RNAs. The protein is tRNA pseudouridine synthase A of Pseudoalteromonas atlantica (strain T6c / ATCC BAA-1087).